Here is an 860-residue protein sequence, read N- to C-terminus: Leucine--tRNA ligase (860 aa).

A 'HIGH' region motif is present at residues 42–52 (PYPSGRLHMGH). The 'KMSKS' region motif lies at 619 to 623 (KMSKS). Position 622 (Lys-622) interacts with ATP.

It belongs to the class-I aminoacyl-tRNA synthetase family.

Its subcellular location is the cytoplasm. It carries out the reaction tRNA(Leu) + L-leucine + ATP = L-leucyl-tRNA(Leu) + AMP + diphosphate. The chain is Leucine--tRNA ligase from Escherichia coli O157:H7.